Here is a 263-residue protein sequence, read N- to C-terminus: MEIAFDLSSIFTDNIQRLEKADLLKYSPKQYWAVAKSIDTLGEMSSKFHGWKRIITMYEKIIDHDEDQTVYILWDKVDGNKSVLKGILRVGYKTLYLTDNEQNQYMEKAMCILDFFIVPTEQRSGNGFNMFDAMLKAENVLVEQCAFDKPSAALRQFLEKYYDQKEPVMQSNKYAVFPNFFIGRHPTVPFTPRQTKRASRASSAVSSHTTSRNTSPIGRNRPRHDSVADLMRQDNFPRGRSVIDPNSPAGFKLTRDQRHEPIW.

An N-acetyltransferase domain is found at 1-181 (MEIAFDLSSI…NKYAVFPNFF (181 aa)). 115-128 (FFIVPTEQRSGNGF) contacts acetyl-CoA. 2 disordered regions span residues 191 to 224 (TPRQ…RPRH) and 236 to 263 (FPRG…EPIW). The span at 200–212 (RASSAVSSHTTSR) shows a compositional bias: low complexity. A compositionally biased stretch (basic and acidic residues) spans 253 to 263 (LTRDQRHEPIW).

Belongs to the acetyltransferase ATAT1 family.

It catalyses the reaction L-lysyl-[alpha-tubulin] + acetyl-CoA = N(6)-acetyl-L-lysyl-[alpha-tubulin] + CoA + H(+). In terms of biological role, specifically acetylates 'Lys-40' in alpha-tubulin/mec-12 on the lumenal side of microtubules. Promotes microtubule destabilization and accelerates microtubule dynamics; this activity may be independent of acetylation activity. Acetylates alpha-tubulin with a slow enzymatic rate, due to a catalytic site that is not optimized for acetyl transfer. Enters the microtubule through each end and diffuses quickly throughout the lumen of microtubules. Acetylates only long/old microtubules because of its slow acetylation rate since it does not have time to act on dynamically unstable microtubules before the enzyme is released. Required for the maintenance of touch receptor neurons and possibly other type of neurons involved in locomotion. This chain is Alpha-tubulin N-acetyltransferase 2 (atat-2), found in Caenorhabditis briggsae.